Here is a 211-residue protein sequence, read N- to C-terminus: Neuroendocrine protein 7B2 (211 aa).

Residues 1–26 (MVSRMVSTMLSGLLFWLASGWTPAFA) form the signal peptide. A disordered region spans residues 106–132 (DFSEDQGYPDPPNPCPVGKTDDGCLEN). Cysteines 120 and 129 form a disulfide. A phosphoserine mark is found at serine 140 and serine 204. The disordered stretch occupies residues 173–211 (GGERRKRRSVNPYLQGQRLDNVVAKKSVPHFSDEDKDPE).

This sequence belongs to the 7B2 family. As to quaternary structure, interacts with PCSK2/PC2 early in the secretory pathway. Dissociation occurs at later stages. In terms of processing, proteolytically cleaved in the Golgi by a furin-like convertase to generate bioactive peptides. Post-translationally, sulfated on tyrosine residues.

The protein resides in the secreted. Acts as a molecular chaperone for PCSK2/PC2, preventing its premature activation in the regulated secretory pathway. Binds to inactive PCSK2 in the endoplasmic reticulum and facilitates its transport from there to later compartments of the secretory pathway where it is proteolytically matured and activated. Also required for cleavage of PCSK2 but does not appear to be involved in its folding. Plays a role in regulating pituitary hormone secretion. The C-terminal peptide inhibits PCSK2 in vitro. The sequence is that of Neuroendocrine protein 7B2 (SCG5) from Pan troglodytes (Chimpanzee).